The sequence spans 473 residues: Bifunctional protein HldE (473 aa).

Residues 1-318 form a ribokinase region; that stretch reads MKLSMPRFDQ…RAVQREEGSE (318 aa). Position 194–197 (194–197) interacts with ATP; the sequence is NLGE. Residue Asp263 is part of the active site. The cytidylyltransferase stretch occupies residues 343–473; that stretch reads FTNGCFDILH…TAIVEKIRKA (131 aa).

It in the N-terminal section; belongs to the carbohydrate kinase PfkB family. This sequence in the C-terminal section; belongs to the cytidylyltransferase family. Homodimer.

It catalyses the reaction D-glycero-beta-D-manno-heptose 7-phosphate + ATP = D-glycero-beta-D-manno-heptose 1,7-bisphosphate + ADP + H(+). The catalysed reaction is D-glycero-beta-D-manno-heptose 1-phosphate + ATP + H(+) = ADP-D-glycero-beta-D-manno-heptose + diphosphate. The protein operates within nucleotide-sugar biosynthesis; ADP-L-glycero-beta-D-manno-heptose biosynthesis; ADP-L-glycero-beta-D-manno-heptose from D-glycero-beta-D-manno-heptose 7-phosphate: step 1/4. Its pathway is nucleotide-sugar biosynthesis; ADP-L-glycero-beta-D-manno-heptose biosynthesis; ADP-L-glycero-beta-D-manno-heptose from D-glycero-beta-D-manno-heptose 7-phosphate: step 3/4. Catalyzes the phosphorylation of D-glycero-D-manno-heptose 7-phosphate at the C-1 position to selectively form D-glycero-beta-D-manno-heptose-1,7-bisphosphate. Its function is as follows. Catalyzes the ADP transfer from ATP to D-glycero-beta-D-manno-heptose 1-phosphate, yielding ADP-D-glycero-beta-D-manno-heptose. This Stutzerimonas stutzeri (strain A1501) (Pseudomonas stutzeri) protein is Bifunctional protein HldE.